The sequence spans 173 residues: Calcineurin subunit B (173 aa).

EF-hand domains lie at 20-55 (DEIDRLRKRFMKLDTDASGILETNEFLSLPGVAANP), 59-87 (RLMDVFDENHSGDVDFQEFINGLSTFSTK), 89-124 (NKKEKLRFAFKVYDIDRDGYISNGELFIVLKMMVGN), and 130-165 (QLQQIVDKTIMEADKDGDGKISFEEFEAQVGGTNVY). Residues D33, D35, S37, E44, D65, N67, S69, D71, E76, D102, D104, D106, Y108, E113, D143, D145, D147, K149, and E154 each coordinate Ca(2+).

The protein belongs to the calcineurin regulatory subunit family. As to quaternary structure, composed of a catalytic subunit (A) and a regulatory subunit (B).

Regulatory subunit of calcineurin, a calcium-dependent, calmodulin stimulated protein phosphatase. Confers calcium sensitivity. The polypeptide is Calcineurin subunit B (CNB1) (Yarrowia lipolytica (strain CLIB 122 / E 150) (Yeast)).